Consider the following 281-residue polypeptide: 3-methyl-2-oxobutanoate hydroxymethyltransferase (281 aa).

A disordered region spans residues 1–20; the sequence is MSEQTIYGANTPGGSGPRTK. The Mg(2+) site is built by Asp-62 and Asp-101. 3-methyl-2-oxobutanoate-binding positions include 62 to 63, Asp-101, and Lys-131; that span reads DS. Mg(2+) is bound at residue Glu-133. The Proton acceptor role is filled by Glu-199.

It belongs to the PanB family. Homodecamer; pentamer of dimers. Mg(2+) is required as a cofactor.

Its subcellular location is the cytoplasm. The catalysed reaction is 3-methyl-2-oxobutanoate + (6R)-5,10-methylene-5,6,7,8-tetrahydrofolate + H2O = 2-dehydropantoate + (6S)-5,6,7,8-tetrahydrofolate. It functions in the pathway cofactor biosynthesis; (R)-pantothenate biosynthesis; (R)-pantoate from 3-methyl-2-oxobutanoate: step 1/2. Catalyzes the reversible reaction in which hydroxymethyl group from 5,10-methylenetetrahydrofolate is transferred onto alpha-ketoisovalerate to form ketopantoate. In Mycobacterium bovis (strain ATCC BAA-935 / AF2122/97), this protein is 3-methyl-2-oxobutanoate hydroxymethyltransferase.